Here is a 55-residue protein sequence, read N- to C-terminus: Trypsin inhibitor (55 aa).

Residues 4–54 (CLLPIKTGPCKGSFPRYAYDSSEDKCVEFIYGGCQANANNFETIEECEAAC) enclose the BPTI/Kunitz inhibitor domain. Disulfide bonds link cysteine 4-cysteine 54, cysteine 13-cysteine 37, and cysteine 29-cysteine 50.

As to quaternary structure, monomer. Expressed exclusively in the middle silk gland.

Its function is as follows. This cocoon shell-associated protein inhibits trypsin Activity by forming a low-dissociation complex with trypsin. May play an important part in regulating proteolytic activity in the silk gland or protecting silk proteins from degradation during histolysis. The sequence is that of Trypsin inhibitor from Bombyx mori (Silk moth).